A 482-amino-acid chain; its full sequence is Glutamate-rich WD repeat-containing protein 1 (482 aa).

2 disordered regions span residues 1-75 (MSSK…WRAG) and 148-180 (QLHK…EDKD). Acidic residues-rich tracts occupy residues 27–63 (NGED…DNDG) and 157–180 (EDSD…EDKD). WD repeat units lie at residues 191–231 (NHNG…KALD), 294–334 (GHTE…PAIT), 337–377 (AHTA…DNSP), 383–423 (YHTG…DTEE), and 446–482 (QGQH…NSEE).

The protein localises to the nucleus. The protein resides in the nucleolus. In Dictyostelium discoideum (Social amoeba), this protein is Glutamate-rich WD repeat-containing protein 1 (grwd1).